A 238-amino-acid polypeptide reads, in one-letter code: Ribosomal RNA large subunit methyltransferase E (238 aa).

S-adenosyl-L-methionine is bound by residues Gly-76, Trp-78, Asp-99, Asp-115, and Asp-139. The active-site Proton acceptor is the Lys-179.

This sequence belongs to the class I-like SAM-binding methyltransferase superfamily. RNA methyltransferase RlmE family.

It is found in the cytoplasm. The enzyme catalyses uridine(2552) in 23S rRNA + S-adenosyl-L-methionine = 2'-O-methyluridine(2552) in 23S rRNA + S-adenosyl-L-homocysteine + H(+). Specifically methylates the uridine in position 2552 of 23S rRNA at the 2'-O position of the ribose in the fully assembled 50S ribosomal subunit. In Rhodopseudomonas palustris (strain BisB18), this protein is Ribosomal RNA large subunit methyltransferase E.